The primary structure comprises 143 residues: Insertion element IS2 uncharacterized 16.4 kDa protein (143 aa).

The polypeptide is Insertion element IS2 uncharacterized 16.4 kDa protein (Escherichia coli).